We begin with the raw amino-acid sequence, 227 residues long: Cytochrome c oxidase subunit 2 (227 aa).

At 1–14 the chain is on the mitochondrial intermembrane side; sequence MAYPFQLGLQDASS. The chain crosses the membrane as a helical span at residues 15 to 45; it reads PIMEELMNFHDHTLMIVFLISSLVLYLMALM. Residues 46-59 are Mitochondrial matrix-facing; that stretch reads LSTKLIHTSTMDAQ. Residues 60-87 traverse the membrane as a helical segment; the sequence is EVETIWTILPAIILIMIALPSLRILYMM. Residues 88–227 are Mitochondrial intermembrane-facing; the sequence is DEINNPILTV…LFENWSMSMT (140 aa). Cu cation-binding residues include His161, Cys196, Glu198, Cys200, His204, and Met207. Glu198 contacts Mg(2+).

Belongs to the cytochrome c oxidase subunit 2 family. Component of the cytochrome c oxidase (complex IV, CIV), a multisubunit enzyme composed of 14 subunits. The complex is composed of a catalytic core of 3 subunits MT-CO1, MT-CO2 and MT-CO3, encoded in the mitochondrial DNA, and 11 supernumerary subunits COX4I, COX5A, COX5B, COX6A, COX6B, COX6C, COX7A, COX7B, COX7C, COX8 and NDUFA4, which are encoded in the nuclear genome. The complex exists as a monomer or a dimer and forms supercomplexes (SCs) in the inner mitochondrial membrane with NADH-ubiquinone oxidoreductase (complex I, CI) and ubiquinol-cytochrome c oxidoreductase (cytochrome b-c1 complex, complex III, CIII), resulting in different assemblies (supercomplex SCI(1)III(2)IV(1) and megacomplex MCI(2)III(2)IV(2)). Found in a complex with TMEM177, COA6, COX18, COX20, SCO1 and SCO2. Interacts with TMEM177 in a COX20-dependent manner. Interacts with COX20. Interacts with COX16. The cofactor is Cu cation.

It localises to the mitochondrion inner membrane. The enzyme catalyses 4 Fe(II)-[cytochrome c] + O2 + 8 H(+)(in) = 4 Fe(III)-[cytochrome c] + 2 H2O + 4 H(+)(out). In terms of biological role, component of the cytochrome c oxidase, the last enzyme in the mitochondrial electron transport chain which drives oxidative phosphorylation. The respiratory chain contains 3 multisubunit complexes succinate dehydrogenase (complex II, CII), ubiquinol-cytochrome c oxidoreductase (cytochrome b-c1 complex, complex III, CIII) and cytochrome c oxidase (complex IV, CIV), that cooperate to transfer electrons derived from NADH and succinate to molecular oxygen, creating an electrochemical gradient over the inner membrane that drives transmembrane transport and the ATP synthase. Cytochrome c oxidase is the component of the respiratory chain that catalyzes the reduction of oxygen to water. Electrons originating from reduced cytochrome c in the intermembrane space (IMS) are transferred via the dinuclear copper A center (CU(A)) of subunit 2 and heme A of subunit 1 to the active site in subunit 1, a binuclear center (BNC) formed by heme A3 and copper B (CU(B)). The BNC reduces molecular oxygen to 2 water molecules using 4 electrons from cytochrome c in the IMS and 4 protons from the mitochondrial matrix. This chain is Cytochrome c oxidase subunit 2 (MT-CO2), found in Gerbillus gerbillus (Lesser Egyptian gerbil).